Consider the following 357-residue polypeptide: Peptide chain release factor 1 (357 aa).

N5-methylglutamine is present on Q234. The tract at residues S283 to Q313 is disordered.

Belongs to the prokaryotic/mitochondrial release factor family. Methylated by PrmC. Methylation increases the termination efficiency of RF1.

Its subcellular location is the cytoplasm. Peptide chain release factor 1 directs the termination of translation in response to the peptide chain termination codons UAG and UAA. The polypeptide is Peptide chain release factor 1 (Borrelia garinii subsp. bavariensis (strain ATCC BAA-2496 / DSM 23469 / PBi) (Borreliella bavariensis)).